We begin with the raw amino-acid sequence, 380 residues long: Putative zinc finger protein C02F5.12 (380 aa).

The interval 137-187 (NLDIPGTSSDIPSDPSSALKVPKKEVLDESEEILDQTSGSSSFSLNDSEQA) is disordered. 2 stretches are compositionally biased toward polar residues: residues 142–152 (GTSSDIPSDPS) and 171–187 (DQTS…SEQA). The segment at 271–294 (IPCKLCGFECTNVRRMRSHYAKAH) adopts a C2H2-type zinc-finger fold.

It localises to the nucleus. This is Putative zinc finger protein C02F5.12 from Caenorhabditis elegans.